The primary structure comprises 513 residues: Na(+)/H(+) antiporter NhaB (513 aa).

The next 11 helical transmembrane spans lie at 21-41, 88-108, 119-139, 143-163, 208-228, 247-267, 303-323, 357-377, 389-409, 447-467, and 477-497; these read ITIV…SPFI, IIAN…IYFM, LLLS…SAAF, FLDA…FYGV, VGTA…LIIA, LPVL…GVFG, ALIG…VGII, LVVF…APII, LALF…VFVA, ATPN…APLI, and MALP…EYIL.

The protein belongs to the NhaB Na(+)/H(+) (TC 2.A.34) antiporter family.

Its subcellular location is the cell inner membrane. The catalysed reaction is 2 Na(+)(in) + 3 H(+)(out) = 2 Na(+)(out) + 3 H(+)(in). In terms of biological role, na(+)/H(+) antiporter that extrudes sodium in exchange for external protons. This Pasteurella multocida (strain Pm70) protein is Na(+)/H(+) antiporter NhaB.